Reading from the N-terminus, the 327-residue chain is Metal-binding protein YtgA (327 aa).

Residues 1–20 form the signal peptide; the sequence is MDAKMGYIFKVMRWIFCFVA. Residues His-73, His-139, His-205, and Asp-297 each contribute to the Fe(2+) site.

It belongs to the bacterial solute-binding protein 9 family. Monomer.

Its subcellular location is the periplasm. Functionally, part of the ATP-binding cassette (ABC) transport system YtgABCD involved in metal import. Binds Fe(2+), Mn(2+) and Ni(2+), with a preference for Fe(2+) and delivers them to the membrane permease for translocation into the cytoplasm. The chain is Metal-binding protein YtgA from Chlamydia pneumoniae (Chlamydophila pneumoniae).